We begin with the raw amino-acid sequence, 419 residues long: Pygopus homolog 1 (419 aa).

2 disordered regions span residues 1–64 (MPAE…PNSD) and 175–338 (HFRQ…SSSD). Residues 18-30 (GDSGLDGLGGPGV) are compositionally biased toward gly residues. The Nuclear localization signal motif lies at 35 to 41 (PDKKKRK). Polar residues-rich tracts occupy residues 175-221 (HFRQ…SNHS) and 240-255 (DFTQGATKNTNQNSSA). A compositionally biased stretch (low complexity) spans 276 to 286 (VNRNNAVNQEN). The span at 287 to 307 (SRSSSTEATNNNPANGTQNKP) shows a compositional bias: polar residues. The segment at 340-398 (VYPCGICTNEVNDDQDAILCEASCQKWFHRICTGMTETAYGLLTAEASAVWGCDTCMAD) adopts a PHD-type zinc-finger fold. The tract at residues 341 to 388 (YPCGICTNEVNDDQDAILCEASCQKWFHRICTGMTETAYGLLTAEASA) is interaction with H3K4me2. An interaction with BCL9 region spans residues 373 to 391 (GMTETAYGLLTAEASAVWG).

In terms of assembly, interacts with BCL9 via The PHD-type zinc finger motiv, and thereby becomes part of the nuclear beta-catenin/TCF complex. Identified in a complex with BCL9L, CDC73, CTNNB1 and PYGO1. Interacts with histone H3 mono-, di- or tri-methylated at 'Lys4' (H3K4me1, H3K4me2, H3K4me3); the interaction is enhanced by the interaction with BCL9.

The protein localises to the nucleus. Functionally, involved in signal transduction through the Wnt pathway. The chain is Pygopus homolog 1 (PYGO1) from Homo sapiens (Human).